Consider the following 206-residue polypeptide: Small ribosomal subunit protein uS3 (206 aa).

One can recognise a KH type-2 domain in the interval 39–107 (IRSYINESFK…SVEVNVVGVK (69 aa)).

Belongs to the universal ribosomal protein uS3 family. Part of the 30S ribosomal subunit. Forms a tight complex with proteins S10 and S14.

Binds the lower part of the 30S subunit head. Binds mRNA in the 70S ribosome, positioning it for translation. The chain is Small ribosomal subunit protein uS3 from Wolbachia pipientis subsp. Culex pipiens (strain wPip).